Reading from the N-terminus, the 118-residue chain is Non-specific lipid-transfer protein 1 (118 aa).

A signal peptide spans 1–25 (MAGVMKLACLLLACMIVAGPITSNA). 4 disulfide bridges follow: cysteine 29–cysteine 76, cysteine 39–cysteine 53, cysteine 54–cysteine 100, and cysteine 74–cysteine 114.

It belongs to the plant LTP family. Expressed primarily in epidermal cells.

The protein resides in the secreted. The protein localises to the cell wall. Plant non-specific lipid-transfer proteins transfer phospholipids as well as galactolipids across membranes. May play a role in wax or cutin deposition in the cell walls of expanding epidermal cells and certain secretory tissues. The sequence is that of Non-specific lipid-transfer protein 1 (LTP1) from Arabidopsis thaliana (Mouse-ear cress).